Reading from the N-terminus, the 670-residue chain is Probable Na(+)/H(+) antiporter nhx-3 (670 aa).

The next 8 helical transmembrane spans lie at 41–61, 73–93, 97–117, 129–149, 164–184, 192–212, 235–255, and 268–288; these read VYVI…FNLM, LLII…LSGV, SHAF…YFMP, LVFS…SLLI, EILV…IAIF, FLFI…VVLY, GLSF…FAIA, and ILAP…AEMV. N-linked (GlcNAc...) asparagine glycosylation occurs at Asn310. Helical transmembrane passes span 325–345, 351–371, 390–410, and 418–438; these read MLAQ…TLTS, FIFI…GIIV, FILS…VSIP, and MFIT…GITI. A disordered region spans residues 648–670; the sequence is GDLKGHCGTSRKPKHSMFELRHV.

The protein belongs to the monovalent cation:proton antiporter 1 (CPA1) transporter (TC 2.A.36) family. Post-translationally, phosphorylated. As to expression, expressed in hypodermal cells of the main body syncytium, ut1 cells of the vulva and the spermathecal junction cell.

Its subcellular location is the endomembrane system. Functionally, plays a role in epithelial membrane transport processes. This is Probable Na(+)/H(+) antiporter nhx-3 (nhx-3) from Caenorhabditis elegans.